We begin with the raw amino-acid sequence, 338 residues long: Popeye domain-containing protein 1-A (338 aa).

At 1–40 (MTTESIFITTLPMDFNSQFDNITIGLNDNETLCENWREIH) the chain is on the extracellular side. N-linked (GlcNAc...) asparagine glycosylation is found at N21 and N29. A helical membrane pass occupies residues 41-61 (HLVFHLANTCFAAGLVIPSTL). At 62-65 (NLHM) the chain is on the cytoplasmic side. The helical transmembrane segment at 66–86 (LFLRGMLCLGCTFFIIWAVLF) threads the bilayer. At 87-91 (RCALD) the chain is on the extracellular side. Residues 92 to 112 (IMIWNATFLSINFMHFVYLVY) form a helical membrane-spanning segment. At 113-338 (KKRPIKIKKE…VGPLSHAVFC (226 aa)) the chain is on the cytoplasmic side. Residues 296–317 (TNDNEDGLQNFLRGTSTTSSQR) are disordered. Residues 307–317 (LRGTSTTSSQR) show a composition bias toward polar residues.

It belongs to the popeye family. In terms of tissue distribution, expressed in the heart.

It is found in the lateral cell membrane. The protein resides in the cell junction. It localises to the tight junction. The protein localises to the membrane. Its function is as follows. Cell adhesion molecule involved in the establishment and/or maintenance of cell integrity. Plays a role in vamp3-mediated vesicular transport and recycling of different receptor molecules. May be involved in the formation and regulation of the tight junction (TJ) paracellular permeability barrier in epithelial cells. May induce primordial adhesive contact and aggregation of epithelial cells in a Ca(2+)-independent manner. May be involved in epithelial movement during corneal sheet formation and regeneration. May play a role in the regulation of cell shape and movement by modulating the Rho-GTPase activity. May also be involved in striated muscle regeneration and in the regulation of cell spreading. The polypeptide is Popeye domain-containing protein 1-A (popdc1-a) (Xenopus laevis (African clawed frog)).